The chain runs to 558 residues: Potassium-transporting ATPase potassium-binding subunit (558 aa).

A run of 12 helical transmembrane segments spans residues 1–21 (MEII…SGYL), 66–86 (FNGF…WLFL), 127–147 (MIVM…VCIA), 166–186 (IVRF…ILLM), 245–265 (IWSD…MLFL), 281–301 (ALIL…LTMW), 327–347 (FGAG…TGSV), 354–374 (LTPL…VFGG), 377–397 (VGLM…SLMV), 416–436 (IVLV…LAFM), 482–502 (ISTG…QLLI), and 531–551 (IVFI…LGPI).

The protein belongs to the KdpA family. As to quaternary structure, the system is composed of three essential subunits: KdpA, KdpB and KdpC.

The protein localises to the cell membrane. Part of the high-affinity ATP-driven potassium transport (or Kdp) system, which catalyzes the hydrolysis of ATP coupled with the electrogenic transport of potassium into the cytoplasm. This subunit binds the extracellular potassium ions and delivers the ions to the membrane domain of KdpB through an intramembrane tunnel. The sequence is that of Potassium-transporting ATPase potassium-binding subunit from Staphylococcus aureus (strain bovine RF122 / ET3-1).